Consider the following 494-residue polypeptide: MAKTLSAAQANKEHVLAVSRDFISQPRLTYKTVSGVNGPLVILDEVKFPKFSEIVQLKLADGTHRSGQVLEVSGSKAVVQVFEGTSGIDAKNTLCEFTGDILRTPVSEDMLGRVFNGSGKPIDKGPPILAEDFLDIQGQPINPWSRIYPEEMIQTGISAIDVMNSIARGQKIPIFSAAGLPHNEIAAQICRQAGLVKIPGKSVLDDHEDNFAIVFAAMGVNMETARFFKQDFEENGSMENVCLFLNLANDPTIERIITPRLALTAAEFLAYQCEKHVLVILTDMSSYAEALREVSAAREEVPGRRGFPGYMYTDLATIYERAGRVEGRNGSITQIPILTMPNDDITHPIPDLTGYITEGQIYVDRQLHNRQIYPPVNVLPSLSRLMKSAIGEGMTRKDHSDVSNQLYACYAIGKDVQAMKAVVGEEALTPDDLLYLEFLTKFEKNFITQGNYENRTVFESLDIGWQLLRIFPKEMLKRIPASILAEFYPRDSRH.

R384 serves as a coordination point for ATP.

Belongs to the ATPase alpha/beta chains family. V-ATPase is a heteromultimeric enzyme made up of two complexes: the ATP-hydrolytic V1 complex and the proton translocation V0 complex. The V1 complex consists of three catalytic AB heterodimers that form a heterohexamer, three peripheral stalks each consisting of EG heterodimers, one central rotor including subunits D and F, and the regulatory subunits C and H. The proton translocation complex V0 consists of the proton transport subunit a, a ring of proteolipid subunits c9c'', rotary subunit d, subunits e and f, and the accessory subunits VhaAC45 and ATP6AP2.

In terms of biological role, non-catalytic subunit of the V1 complex of vacuolar(H+)-ATPase (V-ATPase), a multisubunit enzyme composed of a peripheral complex (V1) that hydrolyzes ATP and a membrane integral complex (V0) that translocates protons. V-ATPase is responsible for acidifying and maintaining the pH of intracellular compartments and in some cell types, is targeted to the plasma membrane, where it is responsible for acidifying the extracellular environment. Essential for the proper assembly and activity of V-ATPase. In Manduca sexta (Tobacco hawkmoth), this protein is V-type proton ATPase subunit B (VHA55).